A 160-amino-acid polypeptide reads, in one-letter code: Protein TCP17 (160 aa).

The protein resides in the cytoplasm. This is Protein TCP17 from Trypanosoma cruzi.